A 137-amino-acid chain; its full sequence is Hemoglobin subunit beta (137 aa).

In terms of domain architecture, Globin spans 3–137; that stretch reads HWTQEERDEI…VIDAISKQYH (135 aa). Residues His-54 and His-83 each contribute to the heme b site.

Belongs to the globin family. As to quaternary structure, heterotetramer of two alpha chains and two beta chains. Red blood cells.

In terms of biological role, involved in oxygen transport from gills to the various peripheral tissues. The polypeptide is Hemoglobin subunit beta (HBB) (Mustelus griseus (Spotless smooth-hound)).